A 288-amino-acid polypeptide reads, in one-letter code: DegV domain-containing protein SAS0714 (288 aa).

Residues 3–282 (IAVMTDSTSY…SGGLGLGYVG (280 aa)) enclose the DegV domain. Hexadecanoate-binding residues include T62 and S95.

May bind long-chain fatty acids, such as palmitate, and may play a role in lipid transport or fatty acid metabolism. The polypeptide is DegV domain-containing protein SAS0714 (Staphylococcus aureus (strain MSSA476)).